The following is a 394-amino-acid chain: Serine palmitoyltransferase (394 aa).

Residues 111-112 (GF), serine 183, histidine 211, and threonine 239 contribute to the pyridoxal 5'-phosphate site. An N6-(pyridoxal phosphate)lysine modification is found at lysine 242.

Belongs to the class-II pyridoxal-phosphate-dependent aminotransferase family. It depends on pyridoxal 5'-phosphate as a cofactor.

The enzyme catalyses L-serine + hexadecanoyl-CoA + H(+) = 3-oxosphinganine + CO2 + CoA. It participates in lipid metabolism; sphingolipid metabolism. Its function is as follows. Involved in de novo bacterial ceramide synthesis. Catalyzes the condensation of L-serine with palmitoyl-CoA (hexadecanoyl-CoA) to produce 3-oxosphinganine. Also capable of using alanine as substrate leading to the formation of 1-deoxysphinganine (1-deoxySa). Contributes to the levels of endogenous sphingolipids in its host. This is Serine palmitoyltransferase from Bacteroides thetaiotaomicron (strain ATCC 29148 / DSM 2079 / JCM 5827 / CCUG 10774 / NCTC 10582 / VPI-5482 / E50).